We begin with the raw amino-acid sequence, 467 residues long: Ribulose bisphosphate carboxylase large chain (467 aa).

N6,N6,N6-trimethyllysine is present on Lys-5. 2 residues coordinate substrate: Asn-114 and Thr-164. The active-site Proton acceptor is Lys-166. Residue Lys-168 coordinates substrate. Lys-192, Asp-194, and Glu-195 together coordinate Mg(2+). Lys-192 is subject to N6-carboxylysine. Residue His-285 is the Proton acceptor of the active site. Positions 286, 318, and 370 each coordinate substrate.

This sequence belongs to the RuBisCO large chain family. Type I subfamily. As to quaternary structure, heterohexadecamer of 8 large chains and 8 small chains; disulfide-linked. The disulfide link is formed within the large subunit homodimers. Requires Mg(2+) as cofactor. The disulfide bond which can form in the large chain dimeric partners within the hexadecamer appears to be associated with oxidative stress and protein turnover.

The protein resides in the plastid. It is found in the chloroplast. It catalyses the reaction 2 (2R)-3-phosphoglycerate + 2 H(+) = D-ribulose 1,5-bisphosphate + CO2 + H2O. The enzyme catalyses D-ribulose 1,5-bisphosphate + O2 = 2-phosphoglycolate + (2R)-3-phosphoglycerate + 2 H(+). Functionally, ruBisCO catalyzes two reactions: the carboxylation of D-ribulose 1,5-bisphosphate, the primary event in carbon dioxide fixation, as well as the oxidative fragmentation of the pentose substrate in the photorespiration process. Both reactions occur simultaneously and in competition at the same active site. The protein is Ribulose bisphosphate carboxylase large chain of Eriodictyon californicum (California yerba santa).